Here is a 547-residue protein sequence, read N- to C-terminus: Smu-2 suppressor of mec-8 and unc-52 protein (547 aa).

5 disordered regions span residues 18–125 (TSAR…AQDQ), 164–202 (IDKS…AQEL), 288–459 (AEPK…AGPK), 496–515 (NGEG…AKRL), and 524–547 (KIMD…KPKY). The segment covering 34–44 (ADPKTGDDKPA) has biased composition (basic and acidic residues). Positions 45–58 (SFKHKHLKPAKFKK) are enriched in basic residues. Residues 66–94 (KAKKEKTEADEDEAALKNILKNYRDRAAE) adopt a coiled-coil conformation. Over residues 87–106 (NYRDRAAERRKQGDEKEDPS) the composition is skewed to basic and acidic residues. A required and sufficient for interaction with smu-1 region spans residues 163–223 (EIDKSDDDDD…SLHRVLFKNE (61 aa)). The segment covering 166 to 178 (KSDDDDDDDIDTA) has biased composition (acidic residues). Low complexity-rich tracts occupy residues 185 to 196 (SSSSSSKPSEAS) and 307 to 317 (APGAAAAAPGA). Basic and acidic residues predominate over residues 330–423 (VPSRKSRDSR…EREKKRKELE (94 aa)). Repeat copies occupy residues 336 to 337 (RD), 339 to 340 (RD), 348 to 349 (RD), 350 to 351 (RS), 352 to 353 (RD), 354 to 355 (RS), 356 to 357 (RD), 358 to 359 (RD), 360 to 361 (RD), 362 to 363 (RD), 364 to 365 (RD), and 367 to 368 (RD). A 12 X 2 AA repeats of R-[DS] region spans residues 336 to 368 (RDSRDAGRRGSRRDRSRDRSRDRDRDRDRDNRD). A coiled-coil region spans residues 371–427 (FEKSANSRREEEQNRREQQRERERAEQERRREREKEREQEKAKEREKKRKELEESSG).

It belongs to the RED family. Probable component of the spliceosome. Heterotetramer with smu-1. The smu-1 homodimer interacts (via the N-terminal region including the LisH and CTLH domains) with smu-2, giving rise to a heterotetramer. In terms of tissue distribution, ubiquitous.

Its subcellular location is the nucleus. In terms of biological role, auxiliary spliceosomal protein that regulates selection of alternative splice sites in a small set of target pre-mRNA species. Selectively regulates alternative splicing of unc-52 exon 17. Thus, smu-2 mutants selectively suppress the effects of unc-52 nonsense mutations in exon 17 by promoting the accumulation of unc-52 isoforms that lack exon 17. In contrast, smu-2 mutants do not suppress the effects of an unc-52 mutation that affects the 5' splice site of exon 16. Required for normal accumulation of smu-1. The polypeptide is Smu-2 suppressor of mec-8 and unc-52 protein (Caenorhabditis elegans).